Here is a 349-residue protein sequence, read N- to C-terminus: tRNA pseudouridine synthase D (349 aa).

Phenylalanine 27 is a substrate binding site. Aspartate 80 acts as the Nucleophile in catalysis. Asparagine 129 provides a ligand contact to substrate. Residues 155-303 (GVPNYFGAQR…VEAARRAMLL (149 aa)) form the TRUD domain. Phenylalanine 329 contributes to the substrate binding site.

It belongs to the pseudouridine synthase TruD family.

The catalysed reaction is uridine(13) in tRNA = pseudouridine(13) in tRNA. Responsible for synthesis of pseudouridine from uracil-13 in transfer RNAs. This is tRNA pseudouridine synthase D from Escherichia coli O45:K1 (strain S88 / ExPEC).